Here is a 132-residue protein sequence, read N- to C-terminus: CLAVATA3/ESR (CLE)-related protein 2-B (132 aa).

An N-terminal signal peptide occupies residues 1–26 (MASRMGMVAILSLFVCALVASTSVNA). Residues 68-132 (NRASKQLDRE…IGPPPFLDRY (65 aa)) form a disordered region. Hydroxyproline occurs at positions 82 and 85. Proline 85 is a glycosylation site (O-linked (Ara...) hydroxyproline).

The protein belongs to the CLV3/ESR signal peptide family. In terms of processing, the O-glycosylation (arabinosylation) of the hydroxyproline Pro-85 enhances binding affinity of the ESR2Bp peptide for its receptor. As to expression, seed endosperm.

The protein localises to the secreted. It is found in the extracellular space. Extracellular signal peptide that regulates cell fate. This is CLAVATA3/ESR (CLE)-related protein 2-B from Zea mays (Maize).